The sequence spans 293 residues: Pantothenate synthetase (293 aa).

30–37 is an ATP binding site; sequence MGYLHKGH. His-37 acts as the Proton donor in catalysis. Residue Gln-61 participates in (R)-pantoate binding. Beta-alanine is bound at residue Gln-61. 147–150 contacts ATP; the sequence is GEKD. Gln-153 contributes to the (R)-pantoate binding site. Residues Val-176 and 184–187 each bind ATP; that span reads CSSR.

This sequence belongs to the pantothenate synthetase family. In terms of assembly, homodimer.

Its subcellular location is the cytoplasm. It carries out the reaction (R)-pantoate + beta-alanine + ATP = (R)-pantothenate + AMP + diphosphate + H(+). Its pathway is cofactor biosynthesis; (R)-pantothenate biosynthesis; (R)-pantothenate from (R)-pantoate and beta-alanine: step 1/1. Its function is as follows. Catalyzes the condensation of pantoate with beta-alanine in an ATP-dependent reaction via a pantoyl-adenylate intermediate. The protein is Pantothenate synthetase of Brucella canis (strain ATCC 23365 / NCTC 10854 / RM-666).